The following is a 425-amino-acid chain: Histone-binding protein RBBP4-B (425 aa).

Alanine 2 carries the N-acetylalanine modification. 7 WD repeats span residues 32–125 (YDLV…NHEG), 126–175 (EVNR…RLRG), 176–223 (HQKE…KTIF), 225–270 (GHTA…HSVD), 271–314 (AHTA…HSFE), 315–371 (SHKD…FIHG), and 372–404 (GHTA…VWQM).

This sequence belongs to the WD repeat RBAP46/RBAP48/MSI1 family. In terms of assembly, binds directly to histone H4, probably via helix 1 of the histone fold, a region that is not accessible when histone H4 is in chromatin. Probably forms a large corepressor complex that contains ncor1, sin3a, hdac1-A and/or hdac1-B, hdac2, rbbp4-A and/or rbbp4-B and possibly rbbp7.

It is found in the nucleus. The protein localises to the chromosome. Its subcellular location is the telomere. Functionally, core histone-binding subunit that may target chromatin assembly factors, chromatin remodeling factors and histone deacetylases to their histone substrates in a manner that is regulated by nucleosomal DNA. Component of several complexes which regulate chromatin metabolism. In Xenopus laevis (African clawed frog), this protein is Histone-binding protein RBBP4-B (rbbp4-b).